A 308-amino-acid chain; its full sequence is Inactive C-alpha-formylglycine-generating enzyme 2 (308 aa).

The N-terminal stretch at 1–33 (MRSEFWFPSMGSLLPPVLLLWLLSCPRLQLGHA) is a signal peptide. A disulfide bridge connects residues C163 and C297. A glycan (N-linked (GlcNAc...) asparagine) is linked at N198. Ca(2+) contacts are provided by N201, L202, D215, F217, D236, G239, V241, and E243. The segment covering 281–291 (RMGNTPDSASD) has biased composition (polar residues). The tract at residues 281–308 (RMGNTPDSASDNLGFRCASSAGRPKEDL) is disordered. The short motif at 305–308 (KEDL) is the Non-canonical ER retention motif element.

The protein belongs to the sulfatase-modifying factor family. In terms of assembly, homodimer and heterodimer with SUMF1.

It is found in the endoplasmic reticulum lumen. Its function is as follows. Lacks formylglycine generating activity and is unable to convert newly synthesized inactive sulfatases to their active form. Inhibits the activation of sulfatases by SUMF1. In Mus musculus (Mouse), this protein is Inactive C-alpha-formylglycine-generating enzyme 2.